The sequence spans 954 residues: MEEEEGAVAKEWGTTPAGPVWTAVFDYEAAGDEELTLRRGDRVQVLSQDCAVSGDEGWWTGQLPSGRVGVFPSNYVAPGAPAAPAGLQLPQEIPFHELQLEEIIGVGGFGKVYRALWRGEEVAVKAARLDPEKDPAVTAEQVCQEARLFGALQHPNIIALRGACLNPPHLCLVMEYARGGALSRVLAGRRVPPHVLVNWAVQVARGMNYLHNDAPVPIIHRDLKSINILILEAIENHNLADTVLKITDFGLAREWHKTTKMSAAGTYAWMAPEVIRLSLFSKSSDVWSFGVLLWELLTGEVPYREIDALAVAYGVAMNKLTLPIPSTCPEPFARLLEECWDPDPHGRPDFGSILKRLEVIEQSALFQMPLESFHSLQEDWKLEIQHMFDDLRTKEKELRSREEELLRAAQEQRFQEEQLRRREQELAEREMDIVERELHLLMCQLSQEKPRVRKRKGNFKRSRLLKLREGGSHISLPSGFEHKITVQASPTLDKRKGSDGASPPASPSIIPRLRAIRLTPVDCGGSSSGSSSGGSGTWSRGGPPKKEELVGGKKKGRTWGPSSTLQKERVGGEERLKGLGEGSKQWSSSAPNLGKSPKHTPIAPGFASLNEMEEFAEAEDGGSSVPPSPYSTPSYLSVPLPAEPSPGARAPWEPTPSAPPARWGHGARRRCDLALLGCATLLGAVGLGADVAEARAADGEEQRRWLDGLFFPRAGRFPRGLSPPARPHGRREDVGPGLGLAPSATLVSLSSVSDCNSTRSLLRSDSDEAAPAAPSPPPSPPAPTPTPSPSTNPLVDLELESFKKDPRQSLTPTHVTAACAVSRGHRRTPSDGALGQRGPPEPAGHGPGPRDLLDFPRLPDPQALFPARRRPPEFPGRPTTLTFAPRPRPAASRPRLDPWKLVSFGRTLTISPPSRPDTPESPGPPSVQPTLLDMDMEGQNQDSTVPLCGAHGSH.

Residues Pro-16–Pro-81 enclose the SH3 domain. A Protein kinase domain is found at Leu-98–Ile-360. ATP-binding positions include Ile-104–Val-112 and Lys-125. Catalysis depends on Asp-222, which acts as the Proton acceptor. Phosphothreonine; by autocatalysis is present on Thr-258. Ser-262 bears the Phosphoserine; by autocatalysis and MAP4K1 mark. 2 leucine-zipper regions span residues Ile-384–Leu-405 and Leu-419–Leu-440. Disordered regions lie at residues Pro-490–His-665, Arg-716–Gly-739, and Ser-757–His-954. A phosphoserine mark is found at Ser-498, Ser-502, and Ser-506. The span at Ala-501–Pro-511 shows a compositional bias: low complexity. At Thr-558 the chain carries Phosphothreonine. Residues Gln-566–Gly-578 show a composition bias toward basic and acidic residues. A compositionally biased stretch (acidic residues) spans Glu-611–Asp-620. A compositionally biased stretch (low complexity) spans Ser-631–Leu-640. Residues Ala-773–Ser-790 show a composition bias toward pro residues. Arg-857 is subject to Omega-N-methylarginine. The segment covering Pro-913–Val-927 has biased composition (pro residues).

This sequence belongs to the protein kinase superfamily. STE Ser/Thr protein kinase family. MAP kinase kinase kinase subfamily. In terms of assembly, homodimer. Interacts with SH3RF2. The cofactor is Mg(2+). In terms of processing, autophosphorylation on serine and threonine residues within the activation loop plays a role in enzyme activation. As to expression, expressed in brain and skeletal muscle.

The enzyme catalyses L-seryl-[protein] + ATP = O-phospho-L-seryl-[protein] + ADP + H(+). It carries out the reaction L-threonyl-[protein] + ATP = O-phospho-L-threonyl-[protein] + ADP + H(+). With respect to regulation, homodimerization via the leucine zipper domains is required for autophosphorylation and subsequent activation. Functionally, activates the JUN N-terminal pathway. The polypeptide is Mitogen-activated protein kinase kinase kinase 10 (MAP3K10) (Homo sapiens (Human)).